A 221-amino-acid chain; its full sequence is Arginine ABC transporter permease protein ArtQ (221 aa).

The region spanning Ala-13 to Ile-206 is the ABC transmembrane type-1 domain. 5 helical membrane-spanning segments follow: residues Leu-17–Leu-37, Val-49–Gly-69, Ile-82–Ala-102, Gly-121–Trp-141, and Thr-186–Ile-206.

It belongs to the binding-protein-dependent transport system permease family. HisMQ subfamily. As to quaternary structure, the complex is composed of two ATP-binding proteins (ArtP), two transmembrane proteins (ArtM and ArtQ) and a solute-binding protein (ArtI).

Its subcellular location is the cell inner membrane. Its function is as follows. Part of the ABC transporter complex ArtPIQM involved in arginine transport. Probably responsible for the translocation of the substrate across the membrane. This is Arginine ABC transporter permease protein ArtQ (artQ) from Haemophilus influenzae (strain ATCC 51907 / DSM 11121 / KW20 / Rd).